The chain runs to 168 residues: ATP synthase subunit b (168 aa).

The chain crosses the membrane as a helical span at residues Trp13–Leu33.

It belongs to the ATPase B chain family. As to quaternary structure, F-type ATPases have 2 components, F(1) - the catalytic core - and F(0) - the membrane proton channel. F(1) has five subunits: alpha(3), beta(3), gamma(1), delta(1), epsilon(1). F(0) has three main subunits: a(1), b(2) and c(10-14). The alpha and beta chains form an alternating ring which encloses part of the gamma chain. F(1) is attached to F(0) by a central stalk formed by the gamma and epsilon chains, while a peripheral stalk is formed by the delta and b chains.

The protein localises to the cell membrane. In terms of biological role, f(1)F(0) ATP synthase produces ATP from ADP in the presence of a proton or sodium gradient. F-type ATPases consist of two structural domains, F(1) containing the extramembraneous catalytic core and F(0) containing the membrane proton channel, linked together by a central stalk and a peripheral stalk. During catalysis, ATP synthesis in the catalytic domain of F(1) is coupled via a rotary mechanism of the central stalk subunits to proton translocation. Its function is as follows. Component of the F(0) channel, it forms part of the peripheral stalk, linking F(1) to F(0). In Moorella thermoacetica (strain ATCC 39073 / JCM 9320), this protein is ATP synthase subunit b.